Consider the following 101-residue polypeptide: Urease subunit beta (101 aa).

The protein belongs to the urease beta subunit family. In terms of assembly, heterotrimer of UreA (gamma), UreB (beta) and UreC (alpha) subunits. Three heterotrimers associate to form the active enzyme.

The protein resides in the cytoplasm. The enzyme catalyses urea + 2 H2O + H(+) = hydrogencarbonate + 2 NH4(+). Its pathway is nitrogen metabolism; urea degradation; CO(2) and NH(3) from urea (urease route): step 1/1. This is Urease subunit beta from Cupriavidus pinatubonensis (strain JMP 134 / LMG 1197) (Cupriavidus necator (strain JMP 134)).